A 140-amino-acid chain; its full sequence is Putative pre-16S rRNA nuclease (140 aa).

This sequence belongs to the YqgF nuclease family.

It localises to the cytoplasm. In terms of biological role, could be a nuclease involved in processing of the 5'-end of pre-16S rRNA. This is Putative pre-16S rRNA nuclease from Lachnospira eligens (strain ATCC 27750 / DSM 3376 / VPI C15-48 / C15-B4) (Eubacterium eligens).